A 269-amino-acid chain; its full sequence is MADYDLTKTHIKKLAEPKHEIALSTEDLNVYYGDKRAMHDASLQFERYRITALIGASGSGKSTYLRSLNRMNDNIANTRVTGKIMYRDVDINSDEVDVYKMREHIGMVFQRPNPFAKSIYDNITFALKQHGQKDKKYLDEIVETTLKQAALWDQVKDSLNKSALALSGGQQQRLCIARAIAMKPDILLMDEPASALDPISTNTVEETLIRLKEQYTIVIVTHNMQQAARISDYTAFFHSGHALEFDETRKMFTRPKIKAAEDYVSGHFG.

Positions 23–264 (LSTEDLNVYY…PKIKAAEDYV (242 aa)) constitute an ABC transporter domain. ATP is bound at residue 55–62 (GASGSGKS).

It belongs to the ABC transporter superfamily. Phosphate importer (TC 3.A.1.7) family. In terms of assembly, the complex is composed of two ATP-binding proteins (PstB), two transmembrane proteins (PstC and PstA) and a solute-binding protein (PstS).

It localises to the cell membrane. It carries out the reaction phosphate(out) + ATP + H2O = ADP + 2 phosphate(in) + H(+). In terms of biological role, part of the ABC transporter complex PstSACB involved in phosphate import. Responsible for energy coupling to the transport system. This is Phosphate import ATP-binding protein PstB 1 from Latilactobacillus sakei subsp. sakei (strain 23K) (Lactobacillus sakei subsp. sakei).